The primary structure comprises 914 residues: Protein GAMETE EXPRESSED 2 (914 aa).

Filamin repeat units follow at residues 249–382 (IGYC…IKEV) and 391–485 (ACSV…DVNV). The helical transmembrane segment at 893-913 (LVVVPFSFFSIKLFSLLMVLI) threads the bilayer.

As to expression, in tricellular pollen, expressed in mature sperm cells but not in the vegetative cell. In bicellular pollen, detected in the progenitor generative cell. Detected in the egg cell within the female gametophyte.

It is found in the cell membrane. The protein is Protein GAMETE EXPRESSED 2 (GEX2) of Arabidopsis thaliana (Mouse-ear cress).